Here is a 68-residue protein sequence, read N- to C-terminus: Small ribosomal subunit protein bS21 (68 aa).

A compositionally biased stretch (basic and acidic residues) spans Glu37–Ala49. A disordered region spans residues Glu37–Lys68. Residues Ala50–Arg59 show a composition bias toward basic residues.

This sequence belongs to the bacterial ribosomal protein bS21 family.

This Erythrobacter litoralis (strain HTCC2594) protein is Small ribosomal subunit protein bS21.